The chain runs to 384 residues: Cysteine desulfurase (384 aa).

Pyridoxal 5'-phosphate-binding positions include 74-75 (GT), asparagine 154, glutamine 180, and 200-202 (SGH). The residue at position 203 (lysine 203) is an N6-(pyridoxal phosphate)lysine. Position 238 (threonine 238) interacts with pyridoxal 5'-phosphate. Catalysis depends on cysteine 325, which acts as the Cysteine persulfide intermediate. Cysteine 325 contacts [2Fe-2S] cluster.

The protein belongs to the class-V pyridoxal-phosphate-dependent aminotransferase family. NifS/IscS subfamily. As to quaternary structure, homodimer. The cofactor is pyridoxal 5'-phosphate.

The enzyme catalyses (sulfur carrier)-H + L-cysteine = (sulfur carrier)-SH + L-alanine. Its function is as follows. Catalyzes the removal of elemental sulfur atoms from cysteine to produce alanine. Seems to participate in the biosynthesis of the nitrogenase metalloclusters by providing the inorganic sulfur required for the Fe-S core formation. This Rhodobacter capsulatus (Rhodopseudomonas capsulata) protein is Cysteine desulfurase.